Reading from the N-terminus, the 328-residue chain is uncharacterized protein (328 aa).

Residues 3–126 enclose the Bro-N domain; that stretch reads RVKIGEFKFG…EVIPQVLCTG (124 aa).

This is an uncharacterized protein from Autographa californica nuclear polyhedrosis virus (AcMNPV).